We begin with the raw amino-acid sequence, 254 residues long: 3-oxo-5-alpha-steroid 4-dehydrogenase 2 (254 aa).

Helical transmembrane passes span Ser-8–Ala-28, Pro-72–Phe-92, Phe-146–Ile-166, and Leu-206–Leu-226.

Belongs to the steroid 5-alpha reductase family.

It localises to the microsome membrane. The protein localises to the endoplasmic reticulum membrane. It carries out the reaction a 3-oxo-5alpha-steroid + NADP(+) = a 3-oxo-Delta(4)-steroid + NADPH + H(+). It catalyses the reaction 17beta-hydroxy-5alpha-androstan-3-one + NADP(+) = testosterone + NADPH + H(+). The enzyme catalyses 5alpha-pregnane-3,20-dione + NADP(+) = progesterone + NADPH + H(+). In terms of biological role, converts testosterone (T) into 5-alpha-dihydrotestosterone (DHT) and progesterone or corticosterone into their corresponding 5-alpha-3-oxosteroids. It plays a central role in sexual differentiation and androgen physiology. This chain is 3-oxo-5-alpha-steroid 4-dehydrogenase 2 (SRD5A2), found in Macaca fascicularis (Crab-eating macaque).